The following is a 1440-amino-acid chain: Bridge-like lipid transfer protein family member 3A (1440 aa).

Positions 3-95 constitute a Chorein N-terminal domain; sequence GIIKKQILKH…KVEVEMKTCE (93 aa). Disordered regions lie at residues 267 to 307, 430 to 456, and 751 to 780; these read SAHQ…NSSS, ADSL…FQPP, and KPSA…TEHD. The span at 287 to 307 shows a compositional bias: low complexity; sequence SAQQSWAQAFGGSQGNSNSSS. Residues serine 444, serine 446, serine 755, and serine 758 each carry the phosphoserine modification. Positions 837 to 860 form a coiled coil; that stretch reads ALLRLKEVLQRLQEQLTKDTESMT. Positions 891–1008 are disordered; that stretch reads VDADSAGSDS…ETAVNGQGEL (118 aa). Over residues 911-920 the composition is skewed to basic and acidic residues; that stretch reads SEDRELKSDA. The span at 985–995 shows a compositional bias: low complexity; that stretch reads ASSSPAALKPP. Phosphoserine occurs at positions 988, 1103, and 1106. Residues 1106–1180 form a disordered region; the sequence is SFDGVSLDSS…SPAANSSVSP (75 aa). A compositionally biased stretch (low complexity) spans 1134–1150; sequence LLESESGPESVPPGSLS. The segment covering 1151–1180 has biased composition (polar residues); the sequence is NVSDNAGVQGSPLVNNYGQGSPAANSSVSP. Positions 1401-1435 form a coiled coil; it reads KELPILQKELIETKQALANANQDKEKLLQEIRKYN.

In terms of assembly, homodimer (Potential). Interacts with UHRF1.

The protein localises to the late endosome. In terms of biological role, tube-forming lipid transport protein which probably mediates the transfer of lipids between membranes at organelle contact sites. May be involved in the retrograde traffic of vesicle clusters in the endocytic pathway to the Golgi complex. This chain is Bridge-like lipid transfer protein family member 3A, found in Homo sapiens (Human).